Reading from the N-terminus, the 445-residue chain is Phosphoglucosamine mutase (445 aa).

The active-site Phosphoserine intermediate is Ser102. Mg(2+) contacts are provided by Ser102, Asp241, Asp243, and Asp245. Ser102 bears the Phosphoserine mark.

It belongs to the phosphohexose mutase family. It depends on Mg(2+) as a cofactor. In terms of processing, activated by phosphorylation.

It catalyses the reaction alpha-D-glucosamine 1-phosphate = D-glucosamine 6-phosphate. Its function is as follows. Catalyzes the conversion of glucosamine-6-phosphate to glucosamine-1-phosphate. The polypeptide is Phosphoglucosamine mutase (Klebsiella pneumoniae (strain 342)).